A 242-amino-acid chain; its full sequence is Anti-Pycsar protein Apyc1 (242 aa).

Residues Phe-17–His-216 are beta-lactamase-like. Zn(2+) is bound by residues His-59, His-61, Asp-63, His-64, His-142, Asp-162, and His-216.

This sequence belongs to the anti-Pycsar protein Apyc1 family. In terms of assembly, homodimer. Zn(2+) is required as a cofactor.

It catalyses the reaction 3',5'-cyclic CMP + H2O = CMP + H(+). The catalysed reaction is 3',5'-cyclic UMP + H2O = UMP + H(+). Its function is as follows. Counteracts the endogenous Pycsar antiviral defense system. Phosphodiesterase that enables metal-dependent hydrolysis of host cyclic nucleotide Pycsar defense signals such as cCMP and cUMP. This is Anti-Pycsar protein Apyc1 from Saccharibacillus brassicae.